A 71-amino-acid polypeptide reads, in one-letter code: MRRLKRDPLERAFLRGYQYGVHGKSRELCPFTLPSVRQAWINGWREGRGDNWDGMTGTAGIHRLNELHAVG.

It belongs to the ribosome modulation factor family.

It is found in the cytoplasm. Its function is as follows. During stationary phase, converts 70S ribosomes to an inactive dimeric form (100S ribosomes). The chain is Ribosome modulation factor from Pseudomonas savastanoi pv. phaseolicola (strain 1448A / Race 6) (Pseudomonas syringae pv. phaseolicola (strain 1448A / Race 6)).